The primary structure comprises 448 residues: Divalent metal cation transporter MntH (448 aa).

Over residues 1–10 (MKKDKTERTK) the composition is skewed to basic and acidic residues. Positions 1 to 20 (MKKDKTERTKQSWRKAQNAP) are disordered. The next 11 helical transmembrane spans lie at 41–61 (LFAF…PGNW), 69–89 (SEFG…AVLL), 117–137 (GFVL…AEVI), 147–167 (FGIP…LVLF), 176–196 (IEVI…AEMV), 215–235 (IVTN…TVMP), 270–290 (FSLT…AAAF), 307–327 (LLNP…ALLA), 363–383 (VLAI…GINE), 384–404 (LLIF…IPLV), and 424–444 (IISW…LFYT).

The protein belongs to the NRAMP family.

It is found in the cell membrane. Its function is as follows. H(+)-stimulated, divalent metal cation uptake system. This is Divalent metal cation transporter MntH from Listeria monocytogenes serotype 4b (strain CLIP80459).